Reading from the N-terminus, the 211-residue chain is Mediator of RNA polymerase II transcription subunit 20 (211 aa).

This sequence belongs to the Mediator complex subunit 20 family. As to quaternary structure, component of the Mediator complex.

The protein localises to the nucleus. Its function is as follows. Component of the Mediator complex, a coactivator involved in the regulated transcription of nearly all RNA polymerase II-dependent genes. Mediator functions as a bridge to convey information from gene-specific regulatory proteins to the basal RNA polymerase II transcription machinery. Mediator is recruited to promoters by direct interactions with regulatory proteins and serves as a scaffold for the assembly of a functional preinitiation complex with RNA polymerase II and the general transcription factors. This chain is Mediator of RNA polymerase II transcription subunit 20 (med20), found in Xenopus laevis (African clawed frog).